Reading from the N-terminus, the 455-residue chain is Tryptophan dimethylallyltransferase (455 aa).

Residues 79 to 80 (VL) and glutamate 88 each bind L-tryptophan. Substrate contacts are provided by arginine 99, lysine 186, and tyrosine 188. Residues tyrosine 190 and arginine 256 each contribute to the L-tryptophan site. 7 residues coordinate substrate: arginine 269, lysine 271, tyrosine 273, glutamine 355, tyrosine 357, tyrosine 421, and tyrosine 425.

Belongs to the tryptophan dimethylallyltransferase family. Homodimer.

The catalysed reaction is L-tryptophan + dimethylallyl diphosphate = 4-(3-methylbut-2-enyl)-L-tryptophan + diphosphate. It participates in alkaloid biosynthesis; ergot alkaloid biosynthesis. Functionally, tryptophan dimethylallyltransferase; part of the gene cluster that mediates the biosynthesis of fungal ergot alkaloid. DmaW catalyzes the first step of ergot alkaloid biosynthesis by condensing dimethylallyl diphosphate (DMAP) and tryptophan to form 4-dimethylallyl-L-tryptophan. The second step is catalyzed by the methyltransferase easF that methylates 4-dimethylallyl-L-tryptophan in the presence of S-adenosyl-L-methionine, resulting in the formation of 4-dimethylallyl-L-abrine. The catalase easC and the FAD-dependent oxidoreductase easE then transform 4-dimethylallyl-L-abrine to chanoclavine-I which is further oxidized by easD in the presence of NAD(+), resulting in the formation of chanoclavine-I aldehyde. Agroclavine dehydrogenase easG then mediates the conversion of chanoclavine-I aldehyde to agroclavine via a non-enzymatic adduct reaction: the substrate is an iminium intermediate that is formed spontaneously from chanoclavine-I aldehyde in the presence of glutathione. Further conversion of agroclavine to paspalic acid is a two-step process involving oxidation of agroclavine to elymoclavine and of elymoclavine to paspalic acid, the second step being performed by the elymoclavine oxidase cloA. However, cloA does not encode a functional enzyme indicating that C.fusiformis terminates its ergot alkaloid pathway at elymoclavine. The chain is Tryptophan dimethylallyltransferase from Claviceps fusiformis (Ergot fungus).